A 118-amino-acid chain; its full sequence is Large ribosomal subunit protein uL24 (118 aa).

The protein belongs to the universal ribosomal protein uL24 family. In terms of assembly, part of the 50S ribosomal subunit.

One of two assembly initiator proteins, it binds directly to the 5'-end of the 23S rRNA, where it nucleates assembly of the 50S subunit. Functionally, one of the proteins that surrounds the polypeptide exit tunnel on the outside of the subunit. The protein is Large ribosomal subunit protein uL24 of Prochlorococcus marinus (strain MIT 9515).